The following is a 415-amino-acid chain: 3-isopropylmalate dehydratase large subunit (415 aa).

[4Fe-4S] cluster contacts are provided by Cys-295, Cys-353, and Cys-356.

Belongs to the aconitase/IPM isomerase family. LeuC type 2 subfamily. Heterodimer of LeuC and LeuD. The cofactor is [4Fe-4S] cluster.

It catalyses the reaction (2R,3S)-3-isopropylmalate = (2S)-2-isopropylmalate. It functions in the pathway amino-acid biosynthesis; L-leucine biosynthesis; L-leucine from 3-methyl-2-oxobutanoate: step 2/4. Its function is as follows. Catalyzes the isomerization between 2-isopropylmalate and 3-isopropylmalate, via the formation of 2-isopropylmaleate. The protein is 3-isopropylmalate dehydratase large subunit of Pyrobaculum neutrophilum (strain DSM 2338 / JCM 9278 / NBRC 100436 / V24Sta) (Thermoproteus neutrophilus).